Here is a 199-residue protein sequence, read N- to C-terminus: Holliday junction branch migration complex subunit RuvA (199 aa).

Residues 1 to 63 (MIAYIEGKLA…EDAHTLFGFA (63 aa)) form a domain I region. A domain II region spans residues 64 to 142 (DLMEKEMFLH…KDALLAGSDS (79 aa)). Residues 143 to 151 (KQNFSVSHN) are flexible linker. A domain III region spans residues 151 to 199 (NSIRSEALTALITLGFTKTVAEKNLDLILKGNSNSFTLEDLIKQALKMS).

It belongs to the RuvA family. Homotetramer. Forms an RuvA(8)-RuvB(12)-Holliday junction (HJ) complex. HJ DNA is sandwiched between 2 RuvA tetramers; dsDNA enters through RuvA and exits via RuvB. An RuvB hexamer assembles on each DNA strand where it exits the tetramer. Each RuvB hexamer is contacted by two RuvA subunits (via domain III) on 2 adjacent RuvB subunits; this complex drives branch migration. In the full resolvosome a probable DNA-RuvA(4)-RuvB(12)-RuvC(2) complex forms which resolves the HJ.

It is found in the cytoplasm. In terms of biological role, the RuvA-RuvB-RuvC complex processes Holliday junction (HJ) DNA during genetic recombination and DNA repair, while the RuvA-RuvB complex plays an important role in the rescue of blocked DNA replication forks via replication fork reversal (RFR). RuvA specifically binds to HJ cruciform DNA, conferring on it an open structure. The RuvB hexamer acts as an ATP-dependent pump, pulling dsDNA into and through the RuvAB complex. HJ branch migration allows RuvC to scan DNA until it finds its consensus sequence, where it cleaves and resolves the cruciform DNA. The polypeptide is Holliday junction branch migration complex subunit RuvA (Cytophaga hutchinsonii (strain ATCC 33406 / DSM 1761 / CIP 103989 / NBRC 15051 / NCIMB 9469 / D465)).